Here is a 122-residue protein sequence, read N- to C-terminus: MIQQESRLKVADNTGAKEILCIRVLGGSSRRYAGIGDVIVATVKEAIPGANVKRGDVVKAVVVRTVKERRRADGSYIKFDENAAVIIKNDNDPRGTRIFGPVGRELREKRFMKIVSLAPEVL.

Belongs to the universal ribosomal protein uL14 family. As to quaternary structure, part of the 50S ribosomal subunit. Forms a cluster with proteins L3 and L19. In the 70S ribosome, L14 and L19 interact and together make contacts with the 16S rRNA in bridges B5 and B8.

Binds to 23S rRNA. Forms part of two intersubunit bridges in the 70S ribosome. The sequence is that of Large ribosomal subunit protein uL14 from Mycobacterium sp. (strain KMS).